We begin with the raw amino-acid sequence, 301 residues long: Probable 5-dehydro-4-deoxyglucarate dehydratase (301 aa).

The protein belongs to the DapA family.

It carries out the reaction 5-dehydro-4-deoxy-D-glucarate + H(+) = 2,5-dioxopentanoate + CO2 + H2O. The protein operates within carbohydrate acid metabolism; D-glucarate degradation; 2,5-dioxopentanoate from D-glucarate: step 2/2. This Cereibacter sphaeroides (strain KD131 / KCTC 12085) (Rhodobacter sphaeroides) protein is Probable 5-dehydro-4-deoxyglucarate dehydratase.